An 838-amino-acid chain; its full sequence is Urease (838 aa).

Positions 402–838 constitute a Urease domain; that stretch reads GGFDTHIHFI…LPLTQDYFVY (437 aa). Positions 407, 409, and 490 each coordinate Ni(2+). Lys490 carries the post-translational modification N6-carboxylysine. A substrate-binding site is contributed by His492. Ni(2+)-binding residues include His519 and His545. His593 (proton donor) is an active-site residue. Asp633 contributes to the Ni(2+) binding site.

This sequence in the C-terminal section; belongs to the metallo-dependent hydrolases superfamily. Urease alpha subunit family. As to quaternary structure, homohexamer. It depends on Ni cation as a cofactor. Carboxylation allows a single lysine to coordinate two nickel ions.

It catalyses the reaction urea + 2 H2O + H(+) = hydrogencarbonate + 2 NH4(+). It functions in the pathway nitrogen metabolism; urea degradation; CO(2) and NH(3) from urea (urease route): step 1/1. The polypeptide is Urease (ure1) (Aspergillus fumigatus (strain ATCC MYA-4609 / CBS 101355 / FGSC A1100 / Af293) (Neosartorya fumigata)).